The sequence spans 73 residues: Translation initiation factor IF-1 (73 aa).

The S1-like domain occupies 1–72 (MSKDDLIQFT…TKGRVILRHQ (72 aa)).

Belongs to the IF-1 family. As to quaternary structure, component of the 30S ribosomal translation pre-initiation complex which assembles on the 30S ribosome in the order IF-2 and IF-3, IF-1 and N-formylmethionyl-tRNA(fMet); mRNA recruitment can occur at any time during PIC assembly.

It is found in the cytoplasm. One of the essential components for the initiation of protein synthesis. Stabilizes the binding of IF-2 and IF-3 on the 30S subunit to which N-formylmethionyl-tRNA(fMet) subsequently binds. Helps modulate mRNA selection, yielding the 30S pre-initiation complex (PIC). Upon addition of the 50S ribosomal subunit IF-1, IF-2 and IF-3 are released leaving the mature 70S translation initiation complex. The chain is Translation initiation factor IF-1 from Rickettsia bellii (strain OSU 85-389).